Consider the following 333-residue polypeptide: Secreted mono- and diacylglycerol lipase 1 (333 aa).

Positions 1–16 (MMLILSILSIIAFAAA) are cleaved as a signal peptide. Cystine bridges form between cysteine 56–cysteine 268 and cysteine 276–cysteine 298. Serine 176 serves as the catalytic Nucleophile. Residues aspartate 230 and histidine 288 contribute to the active site.

Belongs to the AB hydrolase superfamily. Lipase family. Class 3 subfamily.

The protein resides in the secreted. It catalyses the reaction a monoacylglycerol + H2O = glycerol + a fatty acid + H(+). The enzyme catalyses a diacylglycerol + H2O = a monoacylglycerol + a fatty acid + H(+). In terms of biological role, secreted mono- and diacylglycerol lipase that allows the use of hydrolyzed lipids as carbon source and might play a role in pathogenicity. Shows lipolytic activity towards olive oil and p-nitrophenylpalmitate. This Fusarium solani (Filamentous fungus) protein is Secreted mono- and diacylglycerol lipase 1.